A 70-amino-acid polypeptide reads, in one-letter code: Translation initiation factor IF-1 (70 aa).

Residues 1–70 enclose the S1-like domain; it reads MKNDKLFLTG…LKLGRITQRK (70 aa).

This sequence belongs to the IF-1 family. Component of the 30S ribosomal translation pre-initiation complex which assembles on the 30S ribosome in the order IF-2 and IF-3, IF-1 and N-formylmethionyl-tRNA(fMet); mRNA recruitment can occur at any time during PIC assembly.

The protein resides in the cytoplasm. Functionally, one of the essential components for the initiation of protein synthesis. Stabilizes the binding of IF-2 and IF-3 on the 30S subunit to which N-formylmethionyl-tRNA(fMet) subsequently binds. Helps modulate mRNA selection, yielding the 30S pre-initiation complex (PIC). Upon addition of the 50S ribosomal subunit IF-1, IF-2 and IF-3 are released leaving the mature 70S translation initiation complex. The polypeptide is Translation initiation factor IF-1 (Mycoplasma genitalium (strain ATCC 33530 / DSM 19775 / NCTC 10195 / G37) (Mycoplasmoides genitalium)).